Here is a 287-residue protein sequence, read N- to C-terminus: Putative sugar uptake protein EF_0928 (287 aa).

Helical transmembrane passes span 5–27, 32–49, 53–71, 84–106, 116–134, 155–177, 182–200, 207–229, 234–256, and 265–284; these read IALV…GGSA, LGMT…FFVI, LTTA…WSLG, VSVG…GAVF, FVVG…YLTA, IRAL…ATGL, IILP…FAFK, FVWM…LLTM, LAIS…IFLL, and MFYV…LLGY.

This sequence belongs to the GRP transporter (TC 2.A.7.5) family.

It localises to the cell membrane. In Enterococcus faecalis (strain ATCC 700802 / V583), this protein is Putative sugar uptake protein EF_0928.